The sequence spans 221 residues: Cytidylate kinase 1 (221 aa).

7–15 lines the ATP pocket; the sequence is GPSASGKSS.

Belongs to the cytidylate kinase family. Type 1 subfamily.

The protein resides in the cytoplasm. It carries out the reaction CMP + ATP = CDP + ADP. The enzyme catalyses dCMP + ATP = dCDP + ADP. This chain is Cytidylate kinase 1, found in Borreliella burgdorferi (strain ATCC 35210 / DSM 4680 / CIP 102532 / B31) (Borrelia burgdorferi).